Consider the following 377-residue polypeptide: DNA dC-&gt;dU-editing enzyme APOBEC-3G (377 aa).

Residues 1-60 (MNPQIRNMVEQMEPDIFVYYFNNRPILSGRNTVWLCYEVKTKDPSGPPLDANIFQGKLYP) are essential for cytoplasmic localization. CMP/dCMP-type deaminase domains follow at residues 29 to 138 (GRNT…LRIL) and 214 to 327 (GQRE…LRTL). Thr32 carries the phosphothreonine; by PKA modification. Zn(2+) is bound by residues His65, Cys97, and Cys100. The interval 209 to 335 (KPWVSGQRET…TLHRDGAKIA (127 aa)) is necessary for homooligomerization. Residues 213–215 (SGQ) form an interaction with DNA region. Thr218 carries the phosphothreonine; by PKA and CAMK2 modification. His257 provides a ligand contact to Zn(2+). Catalysis depends on Glu259, which acts as the Proton donor. The Zn(2+) site is built by Cys287 and Cys290. The segment at 312 to 319 (RIYDDQGR) is interaction with DNA.

This sequence belongs to the cytidine and deoxycytidylate deaminase family. In terms of assembly, homodimer. Homooligomer. Can bind RNA to form ribonucleoprotein complexes of high-molecular-mass (HMM) or low-molecular-mass (LMM). HMM is inactive and heterogeneous in protein composition because of binding nonselectively to cellular RNAs, which in turn are associated with variety of cellular proteins. The LMM form which is enzymatically active has few or no RNAs associated. Its ability to form homooligomer is distinct from its ability to assemble into HMM. Interacts with APOBEC3B, APOBEC3F, MOV10, AGO2, EIF4E, EIF4ENIF1, DCP2 and DDX6 in an RNA-dependent manner. Interacts with AGO1, AGO3 and PKA/PRKACA. Zn(2+) is required as a cofactor.

The protein localises to the cytoplasm. The protein resides in the nucleus. It is found in the P-body. The catalysed reaction is a 2'-deoxycytidine in single-stranded DNA + H2O + H(+) = a 2'-deoxyuridine in single-stranded DNA + NH4(+). Its function is as follows. DNA deaminase (cytidine deaminase) which acts as an inhibitor of retrovirus replication and retrotransposon mobility via deaminase-dependent and -independent mechanisms. Exhibits antiviral activity against vif-deficient: HIV-1 and simian immunodeficiency viruses (SIVs) and also simian foamy virus (SFV). After the penetration of retroviral nucleocapsids into target cells of infection and the initiation of reverse transcription, it can induce the conversion of cytosine to uracil in the minus-sense single-strand viral DNA, leading to G-to-A hypermutations in the subsequent plus-strand viral DNA. The resultant detrimental levels of mutations in the proviral genome, along with a deamination-independent mechanism that works prior to the proviral integration, together exert efficient antiretroviral effects in infected target cells. Selectively targets single-stranded DNA and does not deaminate double-stranded DNA or single- or double-stranded RNA. May inhibit the mobility of LTR retrotransposons. This Chlorocebus aethiops (Green monkey) protein is DNA dC-&gt;dU-editing enzyme APOBEC-3G (APOBEC3G).